The primary structure comprises 170 residues: Envelope protein 166 (170 aa).

Residue Met1 is a topological domain, intravirion. The helical transmembrane segment at 2-22 (FYPVVQVLIGIILVIILILGF) threads the bilayer. The Virion surface segment spans residues 23–170 (YHMKHKPPKK…TVMGIARNVL (148 aa)).

The protein belongs to the asfivirus envelope protein p22 family.

The protein resides in the virion membrane. It localises to the host cell membrane. The chain is Envelope protein 166 from Ornithodoros (relapsing fever ticks).